A 497-amino-acid polypeptide reads, in one-letter code: NADH-ubiquinone oxidoreductase chain 4 (497 aa).

14 consecutive transmembrane segments (helical) span residues 3–23 (FLLYYTLFISFMLWLAALLII), 42–62 (LFFSFFQFILIIFFWILSDNI), 94–114 (ISLLFLLLTFFLTPICILISW), 122–142 (NSFIICLIFITFILFNIFCVL), 144–164 (LVFFYIFFESILIPMFILIGV), 178–198 (LFFYTLLGSLLMLLGILVIYS), 220–240 (ILWASFFFAFCVKVPLFPFHI), 250–270 (PTVGSVILAGVLLKLGTYGLL), 276–296 (IFCDATYFFLPLVYTLCLLGI), 313–333 (IAYASVSHMSFVILGLFTSNI), 340–360 (VFLMLSHGIVSSGLFFCIGCV), 374–394 (GLVSTMPIFSLCLFILILSNI), 418–438 (FAALIATFSIILTAVYSIWLY), and 463–483 (VVGFIFCFITILFGLKGSYII).

The protein belongs to the complex I subunit 4 family.

It localises to the mitochondrion membrane. The enzyme catalyses a ubiquinone + NADH + 5 H(+)(in) = a ubiquinol + NAD(+) + 4 H(+)(out). Its function is as follows. Core subunit of the mitochondrial membrane respiratory chain NADH dehydrogenase (Complex I) that is believed to belong to the minimal assembly required for catalysis. Complex I functions in the transfer of electrons from NADH to the respiratory chain. The immediate electron acceptor for the enzyme is believed to be ubiquinone. The sequence is that of NADH-ubiquinone oxidoreductase chain 4 (ND4) from Acanthamoeba castellanii (Amoeba).